The chain runs to 724 residues: Long-chain-fatty-acid--CoA ligase ACSBG1 (724 aa).

The segment at 1–51 is disordered; that stretch reads MPRNSGAGYGCPHGDPSMLDSRETPQESRQDMTVGTTQEKLKTSSLTDRQP. Positions 20–30 are enriched in basic and acidic residues; it reads DSRETPQESRQ. Polar residues predominate over residues 31 to 51; it reads DMTVGTTQEKLKTSSLTDRQP. Phosphoserine is present on residues Ser53 and Ser56. ATP is bound by residues 282–290, 472–477, Asp550, and Arg565; these read TSGTTGNPK and AGYGLS. At Tyr658 the chain carries Phosphotyrosine. Lys701 lines the ATP pocket.

The protein belongs to the ATP-dependent AMP-binding enzyme family. Bubblegum subfamily.

It localises to the cytoplasm. The protein localises to the cytoplasmic vesicle. It is found in the microsome. Its subcellular location is the endoplasmic reticulum. The protein resides in the cell membrane. The enzyme catalyses a long-chain fatty acid + ATP + CoA = a long-chain fatty acyl-CoA + AMP + diphosphate. The catalysed reaction is (E)-hexadec-2-enoate + ATP + CoA = (2E)-hexadecenoyl-CoA + AMP + diphosphate. It carries out the reaction hexadecanoate + ATP + CoA = hexadecanoyl-CoA + AMP + diphosphate. In terms of biological role, catalyzes the conversion of fatty acids such as long-chain and very long-chain fatty acids to their active form acyl-CoAs for both synthesis of cellular lipids, and degradation via beta-oxidation. Can activate diverse saturated, monosaturated and polyunsaturated fatty acids. The sequence is that of Long-chain-fatty-acid--CoA ligase ACSBG1 from Macaca fascicularis (Crab-eating macaque).